Here is a 226-residue protein sequence, read N- to C-terminus: Large ribosomal subunit protein uL1 (226 aa).

This sequence belongs to the universal ribosomal protein uL1 family. In terms of assembly, part of the 50S ribosomal subunit.

In terms of biological role, binds directly to 23S rRNA. The L1 stalk is quite mobile in the ribosome, and is involved in E site tRNA release. Protein L1 is also a translational repressor protein, it controls the translation of the L11 operon by binding to its mRNA. The sequence is that of Large ribosomal subunit protein uL1 from Treponema pallidum (strain Nichols).